The chain runs to 314 residues: Homoserine O-acetyltransferase (314 aa).

C142 serves as the catalytic Acyl-thioester intermediate. Positions 163 and 192 each coordinate substrate. The active-site Proton acceptor is the H235. The active site involves E237. R249 serves as a coordination point for substrate.

Belongs to the MetA family.

The protein resides in the cytoplasm. The catalysed reaction is L-homoserine + acetyl-CoA = O-acetyl-L-homoserine + CoA. It functions in the pathway amino-acid biosynthesis; L-methionine biosynthesis via de novo pathway; O-acetyl-L-homoserine from L-homoserine: step 1/1. Transfers an acetyl group from acetyl-CoA to L-homoserine, forming acetyl-L-homoserine. The chain is Homoserine O-acetyltransferase from Desulfovibrio desulfuricans (strain ATCC 27774 / DSM 6949 / MB).